Here is an 896-residue protein sequence, read N- to C-terminus: Phycobiliprotein ApcE (896 aa).

Residue Cys190 participates in (2R,3E)-phycocyanobilin binding. 3 PBS-linker domains span residues Asp247–Val427, Leu508–Asp684, and Glu703–Lys881.

This sequence belongs to the phycobilisome linker protein family. Heterodimer of ApcF (a variant beta-allophycocyanin). Phycobilisomes of this organism are composed of a two cylinder core, from which six rods radiate. The core is mainly composed of allophycocyanin alpha and beta chains and of minor components. Post-translationally, contains one covalently linked bilin chromophore. This protein autochromophorylates.

The protein resides in the cellular thylakoid membrane. In terms of biological role, this protein is postulated to act both as terminal energy acceptor (by its phycobilin-like domains) and as a linker polypeptide (by its repeats and arms) that stabilizes the phycobilisome core architecture. Has intrinsic bilin lyase activity. The protein is Phycobiliprotein ApcE (apcE) of Synechocystis sp. (strain ATCC 27184 / PCC 6803 / Kazusa).